Consider the following 441-residue polypeptide: N-acetylmuramyl-L-alanine amidase (441 aa).

The N-terminal stretch at 1 to 25 (MKTKTLFIFSAILTLSIFAPNETFA) is a signal peptide.

It belongs to the peptidase S12 family.

The catalysed reaction is Hydrolyzes the link between N-acetylmuramoyl residues and L-amino acid residues in certain cell-wall glycopeptides.. The protein operates within cell wall biogenesis; peptidoglycan recycling. In terms of biological role, involved in muropeptide recycling. Hydrolyzes the amide bond between N-acetylmuramic acid (MurNAc) and the L-alanine residue of the stem peptide. Cannot hydrolyze muropeptides containing N-acetylglucosamine (GlcNAc) at the non-reducing end. The protein is N-acetylmuramyl-L-alanine amidase of Bacillus subtilis (strain 168).